A 398-amino-acid polypeptide reads, in one-letter code: Tyrosine--tRNA ligase (398 aa).

A 'HIGH' region motif is present at residues 48–57 (PTGADIHLGH). Residues 235–239 (KMSKS) carry the 'KMSKS' region motif. Residue K238 coordinates ATP. Residues 334–398 (VKLAYLLGAT…GKNKFMRLVP (65 aa)) form the S4 RNA-binding domain.

This sequence belongs to the class-I aminoacyl-tRNA synthetase family. TyrS type 2 subfamily. In terms of assembly, homodimer.

Its subcellular location is the cytoplasm. It carries out the reaction tRNA(Tyr) + L-tyrosine + ATP = L-tyrosyl-tRNA(Tyr) + AMP + diphosphate + H(+). Functionally, catalyzes the attachment of tyrosine to tRNA(Tyr) in a two-step reaction: tyrosine is first activated by ATP to form Tyr-AMP and then transferred to the acceptor end of tRNA(Tyr). The chain is Tyrosine--tRNA ligase from Nostoc sp. (strain PCC 7120 / SAG 25.82 / UTEX 2576).